The following is a 253-amino-acid chain: Small ribosomal subunit protein uS2 (253 aa).

The protein belongs to the universal ribosomal protein uS2 family.

This chain is Small ribosomal subunit protein uS2, found in Hahella chejuensis (strain KCTC 2396).